Here is a 393-residue protein sequence, read N- to C-terminus: Formate-dependent phosphoribosylglycinamide formyltransferase (393 aa).

N(1)-(5-phospho-beta-D-ribosyl)glycinamide is bound by residues 22 to 23 (EL) and Glu-82. Residues Arg-114, Lys-155, 160-165 (SSGKGQ), 195-198 (EGLV), and Glu-203 contribute to the ATP site. In terms of domain architecture, ATP-grasp spans 119–308 (LLAAETLQLP…EFALHVRAFL (190 aa)). Residues Glu-267 and Glu-279 each contribute to the Mg(2+) site. N(1)-(5-phospho-beta-D-ribosyl)glycinamide contacts are provided by residues Asp-286, Lys-355, and 362–363 (RR).

It belongs to the PurK/PurT family. As to quaternary structure, homodimer.

It carries out the reaction N(1)-(5-phospho-beta-D-ribosyl)glycinamide + formate + ATP = N(2)-formyl-N(1)-(5-phospho-beta-D-ribosyl)glycinamide + ADP + phosphate + H(+). The protein operates within purine metabolism; IMP biosynthesis via de novo pathway; N(2)-formyl-N(1)-(5-phospho-D-ribosyl)glycinamide from N(1)-(5-phospho-D-ribosyl)glycinamide (formate route): step 1/1. Its function is as follows. Involved in the de novo purine biosynthesis. Catalyzes the transfer of formate to 5-phospho-ribosyl-glycinamide (GAR), producing 5-phospho-ribosyl-N-formylglycinamide (FGAR). Formate is provided by PurU via hydrolysis of 10-formyl-tetrahydrofolate. The protein is Formate-dependent phosphoribosylglycinamide formyltransferase of Yersinia enterocolitica serotype O:8 / biotype 1B (strain NCTC 13174 / 8081).